The sequence spans 172 residues: 3-hydroxydecanoyl-[acyl-carrier-protein] dehydratase (172 aa).

His71 is an active-site residue.

This sequence belongs to the thioester dehydratase family. FabA subfamily. In terms of assembly, homodimer.

The protein localises to the cytoplasm. It catalyses the reaction a (3R)-hydroxyacyl-[ACP] = a (2E)-enoyl-[ACP] + H2O. It carries out the reaction (3R)-hydroxydecanoyl-[ACP] = (2E)-decenoyl-[ACP] + H2O. The catalysed reaction is (2E)-decenoyl-[ACP] = (3Z)-decenoyl-[ACP]. It functions in the pathway lipid metabolism; fatty acid biosynthesis. Functionally, necessary for the introduction of cis unsaturation into fatty acids. Catalyzes the dehydration of (3R)-3-hydroxydecanoyl-ACP to E-(2)-decenoyl-ACP and then its isomerization to Z-(3)-decenoyl-ACP. Can catalyze the dehydratase reaction for beta-hydroxyacyl-ACPs with saturated chain lengths up to 16:0, being most active on intermediate chain length. The chain is 3-hydroxydecanoyl-[acyl-carrier-protein] dehydratase from Proteus mirabilis (strain HI4320).